A 201-amino-acid polypeptide reads, in one-letter code: Ubiquinone biosynthesis accessory factor UbiJ (201 aa).

The SCP2 domain occupies L15 to A112.

This sequence belongs to the UbiJ family. Component of the Ubi complex metabolon, which regroups five ubiquinone biosynthesis proteins (UbiE, UbiF, UbiG, UbiH and UbiI) and two accessory factors (UbiK and the lipid-binding protein UbiJ). Interacts with UbiK and forms a complex composed of 2 UbiK subunits and 1 UbiJ subunit. The UbiK-UbiJ complex interacts with palmitoleic acid.

Its subcellular location is the cytoplasm. Its pathway is cofactor biosynthesis; ubiquinone biosynthesis. Required for ubiquinone (coenzyme Q) biosynthesis under aerobic conditions. Binds hydrophobic ubiquinone biosynthetic intermediates via its SCP2 domain and is essential for the stability of the Ubi complex. May constitute a docking platform where Ubi enzymes assemble and access their SCP2-bound polyprenyl substrates. The chain is Ubiquinone biosynthesis accessory factor UbiJ from Escherichia coli (strain K12).